The primary structure comprises 318 residues: Lipoyl synthase 1 (318 aa).

The disordered stretch occupies residues 6–32 (DTISNPLRPRHPEKVNRPDSASPPKPD). Cys60, Cys65, Cys71, Cys86, Cys90, Cys93, and Ser299 together coordinate [4Fe-4S] cluster. A Radical SAM core domain is found at 72–288 (WDKKHATFMI…EKVAYTKGFL (217 aa)).

Belongs to the radical SAM superfamily. Lipoyl synthase family. [4Fe-4S] cluster serves as cofactor.

The protein resides in the cytoplasm. The catalysed reaction is [[Fe-S] cluster scaffold protein carrying a second [4Fe-4S](2+) cluster] + N(6)-octanoyl-L-lysyl-[protein] + 2 oxidized [2Fe-2S]-[ferredoxin] + 2 S-adenosyl-L-methionine + 4 H(+) = [[Fe-S] cluster scaffold protein] + N(6)-[(R)-dihydrolipoyl]-L-lysyl-[protein] + 4 Fe(3+) + 2 hydrogen sulfide + 2 5'-deoxyadenosine + 2 L-methionine + 2 reduced [2Fe-2S]-[ferredoxin]. The protein operates within protein modification; protein lipoylation via endogenous pathway; protein N(6)-(lipoyl)lysine from octanoyl-[acyl-carrier-protein]: step 2/2. In terms of biological role, catalyzes the radical-mediated insertion of two sulfur atoms into the C-6 and C-8 positions of the octanoyl moiety bound to the lipoyl domains of lipoate-dependent enzymes, thereby converting the octanoylated domains into lipoylated derivatives. The chain is Lipoyl synthase 1 from Bradyrhizobium diazoefficiens (strain JCM 10833 / BCRC 13528 / IAM 13628 / NBRC 14792 / USDA 110).